The primary structure comprises 175 residues: MDIDLHDYIATTPDFPEKGVMFRDINPLIGNGPAYRQAINELIDFARPLKPDIIAGPEARGFVVGSPMAYALGIGFVPARKYGKLPRKSVSSSYSLEYGKNELQMHVDSIKPGQRVFIVDDLLATGGTITATMDLVRQLGGQVVGTGFFIELADLQGRKKIMEVENVPFKSLLEY.

This sequence belongs to the purine/pyrimidine phosphoribosyltransferase family. Homodimer.

It is found in the cytoplasm. The enzyme catalyses AMP + diphosphate = 5-phospho-alpha-D-ribose 1-diphosphate + adenine. It functions in the pathway purine metabolism; AMP biosynthesis via salvage pathway; AMP from adenine: step 1/1. Catalyzes a salvage reaction resulting in the formation of AMP, that is energically less costly than de novo synthesis. The sequence is that of Adenine phosphoribosyltransferase from Oenococcus oeni (strain ATCC BAA-331 / PSU-1).